A 153-amino-acid chain; its full sequence is SsrA-binding protein (153 aa).

Residues 131–153 (EYDKRDSIRERDDRREMDRAFKR) are disordered.

This sequence belongs to the SmpB family.

Its subcellular location is the cytoplasm. In terms of biological role, required for rescue of stalled ribosomes mediated by trans-translation. Binds to transfer-messenger RNA (tmRNA), required for stable association of tmRNA with ribosomes. tmRNA and SmpB together mimic tRNA shape, replacing the anticodon stem-loop with SmpB. tmRNA is encoded by the ssrA gene; the 2 termini fold to resemble tRNA(Ala) and it encodes a 'tag peptide', a short internal open reading frame. During trans-translation Ala-aminoacylated tmRNA acts like a tRNA, entering the A-site of stalled ribosomes, displacing the stalled mRNA. The ribosome then switches to translate the ORF on the tmRNA; the nascent peptide is terminated with the 'tag peptide' encoded by the tmRNA and targeted for degradation. The ribosome is freed to recommence translation, which seems to be the essential function of trans-translation. This chain is SsrA-binding protein, found in Parabacteroides distasonis (strain ATCC 8503 / DSM 20701 / CIP 104284 / JCM 5825 / NCTC 11152).